The primary structure comprises 1121 residues: uncharacterized protein (1121 aa).

Residues 179 to 198 form a disordered region; that stretch reads GPGECQSVHNQSSGSGSNSY. Residues N188, N325, N351, N449, N561, and N615 are each glycosylated (N-linked (GlcNAc...) asparagine; by host). Disordered regions lie at residues 649–684 and 701–734; these read KRIH…RIHN and STRQ…TDSD. Over residues 701 to 715 the composition is skewed to polar residues; it reads STRQDASGGSSSGTK. 4 N-linked (GlcNAc...) asparagine; by host glycosylation sites follow: N838, N911, N914, and N980.

Belongs to the herpesviridae US22 family.

This is an uncharacterized protein from Homo sapiens (Human).